The following is a 356-amino-acid chain: tRNA-specific 2-thiouridylase MnmA (356 aa).

6–13 (AVSGGTDS) serves as a coordination point for ATP. The active-site Nucleophile is C95. Residues C95 and C195 are joined by a disulfide bond. Residue G119 participates in ATP binding. Residues 145-147 (KDQ) are interaction with tRNA. C195 (cysteine persulfide intermediate) is an active-site residue. The segment at 300 to 301 (RY) is interaction with tRNA.

It belongs to the MnmA/TRMU family.

Its subcellular location is the cytoplasm. It catalyses the reaction S-sulfanyl-L-cysteinyl-[protein] + uridine(34) in tRNA + AH2 + ATP = 2-thiouridine(34) in tRNA + L-cysteinyl-[protein] + A + AMP + diphosphate + H(+). Catalyzes the 2-thiolation of uridine at the wobble position (U34) of tRNA, leading to the formation of s(2)U34. This is tRNA-specific 2-thiouridylase MnmA from Oleidesulfovibrio alaskensis (strain ATCC BAA-1058 / DSM 17464 / G20) (Desulfovibrio alaskensis).